The chain runs to 714 residues: Probable serine/threonine-protein kinase At1g09600 (714 aa).

A disordered region spans residues 1 to 64 (MGCNCTKGTR…NVGFEERSND (64 aa)). A lipid anchor (N-myristoyl glycine) is attached at glycine 2. A compositionally biased stretch (low complexity) spans 16–27 (VDNSNSIVSNVN). Residues 31–46 (RRSKPKKTPKKKKKSK) show a composition bias toward basic residues. The region spanning 163-447 (FEKLEKIGQG…TASALESEFF (285 aa)) is the Protein kinase domain. Residues 169 to 177 (IGQGTYSSV) and lysine 192 each bind ATP. Catalysis depends on aspartate 287, which acts as the Proton acceptor. A compositionally biased stretch (basic and acidic residues) spans 471 to 498 (KAQEEEAKRKKDTSSKQNDSKQVSRESK). Disordered stretches follow at residues 471-579 (KAQE…RKEL) and 693-714 (VDKK…ANGR). Polar residues-rich tracts occupy residues 506–528 (NAES…NSDK) and 556–573 (GVSS…GSSR).

Belongs to the protein kinase superfamily. Ser/Thr protein kinase family.

This chain is Probable serine/threonine-protein kinase At1g09600, found in Arabidopsis thaliana (Mouse-ear cress).